Consider the following 447-residue polypeptide: GTPase Der (447 aa).

EngA-type G domains lie at 4-165 and 180-357; these read QIIT…PEEE and LQIV…KIWN. GTP contacts are provided by residues 10–17, 57–61, 119–122, 186–193, 233–237, and 298–301; these read GRPNVGKS, DTPGL, NKCE, GRPNAGKS, DTAGL, and NKWD. A KH-like domain is found at 358–443; that stretch reads KKITTSKLNE…PIRFIYVKTK (86 aa).

It belongs to the TRAFAC class TrmE-Era-EngA-EngB-Septin-like GTPase superfamily. EngA (Der) GTPase family. As to quaternary structure, associates with the 50S ribosomal subunit.

Its function is as follows. GTPase that plays an essential role in the late steps of ribosome biogenesis. This Rickettsia conorii (strain ATCC VR-613 / Malish 7) protein is GTPase Der.